The primary structure comprises 357 residues: Glycerol-3-phosphate dehydrogenase [NAD(P)+] (357 aa).

4 residues coordinate NADPH: Ser30, Phe31, Arg51, and Lys124. Sn-glycerol 3-phosphate-binding residues include Lys124 and Gly152. Ala156 serves as a coordination point for NADPH. Residues Lys207, Asp260, Ser270, Arg271, and Asn272 each coordinate sn-glycerol 3-phosphate. The Proton acceptor role is filled by Lys207. Arg271 lines the NADPH pocket. NADPH is bound at residue Glu297.

This sequence belongs to the NAD-dependent glycerol-3-phosphate dehydrogenase family.

It localises to the cytoplasm. It catalyses the reaction sn-glycerol 3-phosphate + NAD(+) = dihydroxyacetone phosphate + NADH + H(+). The catalysed reaction is sn-glycerol 3-phosphate + NADP(+) = dihydroxyacetone phosphate + NADPH + H(+). The protein operates within membrane lipid metabolism; glycerophospholipid metabolism. Functionally, catalyzes the reduction of the glycolytic intermediate dihydroxyacetone phosphate (DHAP) to sn-glycerol 3-phosphate (G3P), the key precursor for phospholipid synthesis. The chain is Glycerol-3-phosphate dehydrogenase [NAD(P)+] from Acinetobacter baumannii (strain SDF).